The primary structure comprises 695 residues: Polyribonucleotide nucleotidyltransferase (695 aa).

Residues Asp-486 and Asp-492 each coordinate Mg(2+). The 60-residue stretch at 553 to 612 folds into the KH domain; that stretch reads PRIETMQINTSKIATVIGPGGKQIRQIIERSGAQVDINDDGVINIAASTQESINKAKELI. The 69-residue stretch at 622 to 690 folds into the S1 motif domain; that stretch reads GKVYNGRVTS…EKGQLKLSHK (69 aa).

This sequence belongs to the polyribonucleotide nucleotidyltransferase family. Requires Mg(2+) as cofactor.

Its subcellular location is the cytoplasm. It catalyses the reaction RNA(n+1) + phosphate = RNA(n) + a ribonucleoside 5'-diphosphate. In terms of biological role, involved in mRNA degradation. Catalyzes the phosphorolysis of single-stranded polyribonucleotides processively in the 3'- to 5'-direction. The polypeptide is Polyribonucleotide nucleotidyltransferase (Chlamydia trachomatis serovar D (strain ATCC VR-885 / DSM 19411 / UW-3/Cx)).